Here is a 340-residue protein sequence, read N- to C-terminus: Phosphoribosylformylglycinamidine cyclo-ligase (340 aa).

The protein belongs to the AIR synthase family.

The protein localises to the cytoplasm. It carries out the reaction 2-formamido-N(1)-(5-O-phospho-beta-D-ribosyl)acetamidine + ATP = 5-amino-1-(5-phospho-beta-D-ribosyl)imidazole + ADP + phosphate + H(+). The protein operates within purine metabolism; IMP biosynthesis via de novo pathway; 5-amino-1-(5-phospho-D-ribosyl)imidazole from N(2)-formyl-N(1)-(5-phospho-D-ribosyl)glycinamide: step 2/2. In Streptococcus agalactiae serotype Ia (strain ATCC 27591 / A909 / CDC SS700), this protein is Phosphoribosylformylglycinamidine cyclo-ligase.